The following is a 278-amino-acid chain: Probable septum site-determining protein MinC (278 aa).

A disordered region spans residues 104–167 (RTQQSVDPAP…ASHTPAAPQS (64 aa)).

This sequence belongs to the MinC family. As to quaternary structure, interacts with MinD and FtsZ.

Cell division inhibitor that blocks the formation of polar Z ring septums. Rapidly oscillates between the poles of the cell to destabilize FtsZ filaments that have formed before they mature into polar Z rings. Prevents FtsZ polymerization. The chain is Probable septum site-determining protein MinC from Bordetella avium (strain 197N).